The primary structure comprises 517 residues: Endoglucanase A (517 aa).

The signal sequence occupies residues 1–25 (MKRSLLKTCSIIAGATIIFSSLSIS). Residue E185 is the Proton donor of the active site. E309 acts as the Nucleophile in catalysis. Residues 382–392 (HPEATEDDKPS) show a composition bias toward basic and acidic residues. A disordered region spans residues 382-424 (HPEATEDDKPSTDVTNPDSGNTKPDSGNTNPGTETTTPTDNEK). Polar residues predominate over residues 393-407 (TDVTNPDSGNTKPDS). Residues 408–420 (GNTNPGTETTTPT) show a composition bias toward low complexity. Positions 416 to 517 (TTTPTDNEKI…VISNFEYKFD (102 aa)) constitute a CBM2 domain.

Belongs to the glycosyl hydrolase 5 (cellulase A) family.

The catalysed reaction is Endohydrolysis of (1-&gt;4)-beta-D-glucosidic linkages in cellulose, lichenin and cereal beta-D-glucans.. Functionally, hydrolyzes barley beta-glucan, lichenan, carboxymethylcellulose and xylan. It shows preferential activity against the larger cellooligosaccharides (cellohexaose and cellopentaose); cellotetraose is the smallest substrate degraded completely. The chain is Endoglucanase A (celA) from Clostridium longisporum.